The following is a 256-amino-acid chain: Deoxyribose-phosphate aldolase (256 aa).

The active-site Proton donor/acceptor is Asp-102. Lys-165 acts as the Schiff-base intermediate with acetaldehyde in catalysis. Residue Lys-197 is the Proton donor/acceptor of the active site.

This sequence belongs to the DeoC/FbaB aldolase family. DeoC type 2 subfamily.

It is found in the cytoplasm. The catalysed reaction is 2-deoxy-D-ribose 5-phosphate = D-glyceraldehyde 3-phosphate + acetaldehyde. Its pathway is carbohydrate degradation; 2-deoxy-D-ribose 1-phosphate degradation; D-glyceraldehyde 3-phosphate and acetaldehyde from 2-deoxy-alpha-D-ribose 1-phosphate: step 2/2. In terms of biological role, catalyzes a reversible aldol reaction between acetaldehyde and D-glyceraldehyde 3-phosphate to generate 2-deoxy-D-ribose 5-phosphate. In Shewanella baltica (strain OS155 / ATCC BAA-1091), this protein is Deoxyribose-phosphate aldolase.